Here is a 151-residue protein sequence, read N- to C-terminus: Small ribosomal subunit protein uS19 (151 aa).

It belongs to the universal ribosomal protein uS19 family.

Its function is as follows. Protein S19 forms a complex with S13 that binds strongly to the 16S ribosomal RNA. This chain is Small ribosomal subunit protein uS19, found in Picrophilus torridus (strain ATCC 700027 / DSM 9790 / JCM 10055 / NBRC 100828 / KAW 2/3).